The following is a 392-amino-acid chain: Esterase EstB (392 aa).

The active-site Acyl-ester intermediate is the S75.

It belongs to the class-A beta-lactamase family.

It localises to the cytoplasm. Its activity is regulated as follows. Strongly inhibited by eserin, NaF, HgCl2, SDS and Triton X-100. Acts on short-chain (C4-C6) fatty acid esters and triglycerides, including tertiary alcohol esters. Activity on p-nitrophenyl esters is generally higher than on o-nitrophenyl esters. Lacks beta-lactamase activity; it hydrolyzes the ester bond of cephalosporin substrates but there is no opening of the beta-lactam ring observed. The sequence is that of Esterase EstB (estB) from Burkholderia gladioli (Pseudomonas marginata).